Here is a 255-residue protein sequence, read N- to C-terminus: Kallikrein-4 (255 aa).

The N-terminal stretch at 1–25 (MMVTARTPWGWFLGCLILEVTGASA) is a signal peptide. The propeptide occupies 26 to 31 (SSVSSR). A Peptidase S1 domain is found at 32 to 253 (IIQGQDCSPH…FTNWIQTIIQ (222 aa)). Histidine 41 serves as a coordination point for Zn(2+). Cysteine 57 and cysteine 73 are joined by a disulfide. The Charge relay system role is filled by histidine 72. Glutamate 92 provides a ligand contact to Zn(2+). The active-site Charge relay system is the aspartate 117. Asparagine 124 and asparagine 170 each carry an N-linked (GlcNAc...) asparagine glycan. 3 disulfides stabilise this stretch: cysteine 149/cysteine 214, cysteine 179/cysteine 193, and cysteine 204/cysteine 229. Serine 208 acts as the Charge relay system in catalysis.

This sequence belongs to the peptidase S1 family. Kallikrein subfamily. N-glycosylated. The N-glycan structures are of complex diantennary or triantennary type, which may be further modified with up to 2 sialic acid residues.

The protein localises to the secreted. Has a major role in enamel formation. Required during the maturation stage of tooth development for clearance of enamel proteins and normal structural patterning of the crystalline matrix. The protein is Kallikrein-4 of Mus musculus (Mouse).